Consider the following 425-residue polypeptide: Dihydroorotase (425 aa).

Zn(2+) contacts are provided by His-56 and His-58. Residues 58-60 and Asn-90 contribute to the substrate site; that span reads HYR. Asp-148, His-175, and His-228 together coordinate Zn(2+). Asn-274 contacts substrate. Asp-301 is a Zn(2+) binding site. Residue Asp-301 is part of the active site. Residues His-305 and 319 to 320 each bind substrate; that span reads FG.

Belongs to the metallo-dependent hydrolases superfamily. DHOase family. Class I DHOase subfamily. It depends on Zn(2+) as a cofactor.

The catalysed reaction is (S)-dihydroorotate + H2O = N-carbamoyl-L-aspartate + H(+). The protein operates within pyrimidine metabolism; UMP biosynthesis via de novo pathway; (S)-dihydroorotate from bicarbonate: step 3/3. Functionally, catalyzes the reversible cyclization of carbamoyl aspartate to dihydroorotate. The chain is Dihydroorotase from Lactobacillus delbrueckii subsp. bulgaricus (strain ATCC BAA-365 / Lb-18).